We begin with the raw amino-acid sequence, 84 residues long: Transmembrane protein EP84R (84 aa).

Helical transmembrane passes span 31–51 (VIGVILLVISLLFIFIGIIIL) and 60–80 (AASIFIVLSLILGGGGFFLIY).

It belongs to the asfivirus EP84R family.

It is found in the virion membrane. This chain is Transmembrane protein EP84R, found in Ornithodoros (relapsing fever ticks).